The sequence spans 245 residues: High affinity immunoglobulin epsilon receptor subunit alpha (245 aa).

A signal peptide spans 1-23 (MDTGGSARLCLALVLISLGVMLT). The Extracellular segment spans residues 24–204 (ATQKSVVSLD…DYTIEYRWLQ (181 aa)). Ig-like domains follow at residues 28–103 (SVVS…KPVY) and 113–181 (LQSS…LNKV). The cysteines at positions 49 and 91 are disulfide-linked. 7 N-linked (GlcNAc...) asparagine glycosylation sites follow: Asn-52, Asn-53, Asn-58, Asn-65, Asn-123, Asn-158, and Asn-167. Cys-130 and Cys-174 form a disulfide bridge. A helical transmembrane segment spans residues 205–223 (LIFPSLAVILFAVDTGLWF). Topologically, residues 224-245 (STHKQFESILKIQKTGKGKKKG) are cytoplasmic.

Tetramer of an alpha chain, a beta chain, and two disulfide linked gamma chains. Interacts with IGHE (via CH3 region). In terms of tissue distribution, expressed in leukocytes and pinealocytes at night (at protein level).

Its subcellular location is the cell membrane. The protein localises to the secreted. High-affinity receptor for immunoglobulin epsilon/IgE. Mediates IgE effector functions in myeloid cells. Upon IgE binding and antigen/allergen cross-linking initiates signaling pathways that lead to myeloid cell activation and differentiation. On mast cells, basophils and eosinophils stimulates the secretion of vasoactive amines, lipid mediators and cytokines that contribute to inflammatory response, tissue remodeling and cytotoxicity against microbes. Triggers the immediate hypersensitivity response to allergens as a host defense mechanism against helminth parasites, pathogenic bacteria and venom toxicity. When dysregulated, it can elicit harmful life-threatening allergic and anaphylactic reactions. This chain is High affinity immunoglobulin epsilon receptor subunit alpha (Fcer1a), found in Rattus norvegicus (Rat).